A 133-amino-acid polypeptide reads, in one-letter code: Putative nickel-responsive regulator (133 aa).

The Ni(2+) site is built by H74, H85, H87, and C93.

Belongs to the transcriptional regulatory CopG/NikR family. It depends on Ni(2+) as a cofactor.

In terms of biological role, transcriptional regulator. This is Putative nickel-responsive regulator from Saccharolobus solfataricus (strain ATCC 35092 / DSM 1617 / JCM 11322 / P2) (Sulfolobus solfataricus).